Here is a 751-residue protein sequence, read N- to C-terminus: Lanosterol synthase erg7A (751 aa).

Residues 1–22 (MTGGPIASWRTAAQGHLTPDEN) are disordered. The PFTB 1 repeat unit spans residues 147 to 189 (ATEIKRYLFARQHPEDGGWGLHIEAHSSVFGTCMNYVALRLIG). Asp481 acts as the Proton donor in catalysis. 3 PFTB repeats span residues 508-553 (LKDS…MIGY), 585-625 (KDKA…ASVG), and 634-675 (ARRG…VQTA).

Belongs to the terpene cyclase/mutase family.

Its subcellular location is the lipid droplet. It is found in the endoplasmic reticulum membrane. The enzyme catalyses (S)-2,3-epoxysqualene = lanosterol. It participates in steroid metabolism; ergosterol biosynthesis. Lanosterol synthase; part of the third module of ergosterol biosynthesis pathway that includes the late steps of the pathway. ERG7A and ERG7B catalyze the cyclization of (S)-2,3 oxidosqualene to lanosterol, a reaction that forms the sterol core. The third module or late pathway involves the ergosterol synthesis itself through consecutive reactions that mainly occur in the endoplasmic reticulum (ER) membrane. Firstly, the squalene synthase erg9 catalyzes the condensation of 2 farnesyl pyrophosphate moieties to form squalene, which is the precursor of all steroids. Squalene synthase is crucial for balancing the incorporation of farnesyl diphosphate (FPP) into sterol and nonsterol isoprene synthesis. Secondly, squalene is converted into lanosterol by the consecutive action of the squalene epoxidase erg1 and the lanosterol synthase erg7. Then, the delta(24)-sterol C-methyltransferase erg6 methylates lanosterol at C-24 to produce eburicol. Eburicol is the substrate of the sterol 14-alpha demethylase encoded by cyp51A and cyp51B, to yield 4,4,24-trimethyl ergosta-8,14,24(28)-trienol. The C-14 reductase erg24 then reduces the C14=C15 double bond which leads to 4,4-dimethylfecosterol. A sequence of further demethylations at C-4, involving the C-4 demethylation complex containing the C-4 methylsterol oxidases erg25A or erg25B, the sterol-4-alpha-carboxylate 3-dehydrogenase erg26 and the 3-keto-steroid reductase erg27, leads to the production of fecosterol via 4-methylfecosterol. The C-8 sterol isomerase erg2 then catalyzes the reaction which results in unsaturation at C-7 in the B ring of sterols and thus converts fecosterol to episterol. The sterol-C5-desaturase erg3B then catalyzes the introduction of a C-5 double bond in the B ring to produce 5-dehydroepisterol. The 2 other sterol-C5-desaturases, erg3A and erg3C, seem to be less important in ergosterol biosynthesis. The C-22 sterol desaturase erg5 further converts 5-dehydroepisterol into ergosta-5,7,22,24(28)-tetraen-3beta-ol by forming the C-22(23) double bond in the sterol side chain. Finally, ergosta-5,7,22,24(28)-tetraen-3beta-ol is substrate of the C-24(28) sterol reductases erg4A and erg4B to produce ergosterol. Possible alternative sterol biosynthetic pathways might exist from fecosterol to ergosterol, depending on the activities of the erg3 isoforms. In Aspergillus fumigatus (strain ATCC MYA-4609 / CBS 101355 / FGSC A1100 / Af293) (Neosartorya fumigata), this protein is Lanosterol synthase erg7A.